The following is a 53-amino-acid chain: Photosystem II reaction center protein K (53 aa).

A propeptide spanning residues 1-16 (MFYTNVETLLNTNCFA) is cleaved from the precursor. Residues 28 to 48 (LVDVLPIIPLLFLLLAFVWQA) traverse the membrane as a helical segment.

This sequence belongs to the PsbK family. PSII is composed of 1 copy each of membrane proteins PsbA, PsbB, PsbC, PsbD, PsbE, PsbF, PsbH, PsbI, PsbJ, PsbK, PsbL, PsbM, PsbT, PsbY, PsbZ, Psb30/Ycf12, at least 3 peripheral proteins of the oxygen-evolving complex and a large number of cofactors. It forms dimeric complexes.

The protein resides in the plastid. Its subcellular location is the chloroplast thylakoid membrane. Functionally, one of the components of the core complex of photosystem II (PSII). PSII is a light-driven water:plastoquinone oxidoreductase that uses light energy to abstract electrons from H(2)O, generating O(2) and a proton gradient subsequently used for ATP formation. It consists of a core antenna complex that captures photons, and an electron transfer chain that converts photonic excitation into a charge separation. This Euglena anabaena (Euglenaria anabaena) protein is Photosystem II reaction center protein K.